A 475-amino-acid chain; its full sequence is Ribulose bisphosphate carboxylase large chain (475 aa).

The substrate site is built by N123 and T173. Residue K175 is the Proton acceptor of the active site. Residue K177 coordinates substrate. 3 residues coordinate Mg(2+): K201, D203, and E204. Position 201 is an N6-carboxylysine (K201). The Proton acceptor role is filled by H294. Substrate-binding residues include R295, H327, and S379.

This sequence belongs to the RuBisCO large chain family. Type I subfamily. In terms of assembly, heterohexadecamer of 8 large chains and 8 small chains; disulfide-linked. The disulfide link is formed within the large subunit homodimers. Interacts with assembly factor Raf1 which helps form the holoenzyme, most interaction (and folding) occurs in the cytoplasm. Mg(2+) serves as cofactor. The disulfide bond which can form in the large chain dimeric partners within the hexadecamer appears to be associated with oxidative stress and protein turnover.

Its subcellular location is the carboxysome. The protein localises to the cytoplasm. It catalyses the reaction 2 (2R)-3-phosphoglycerate + 2 H(+) = D-ribulose 1,5-bisphosphate + CO2 + H2O. It carries out the reaction D-ribulose 1,5-bisphosphate + O2 = 2-phosphoglycolate + (2R)-3-phosphoglycerate + 2 H(+). Its function is as follows. RuBisCO catalyzes two reactions: the carboxylation of D-ribulose 1,5-bisphosphate, the primary event in carbon dioxide fixation, as well as the oxidative fragmentation of the pentose substrate in the photorespiration process. Both reactions occur simultaneously and in competition at the same active site. In Thermosynechococcus vestitus (strain NIES-2133 / IAM M-273 / BP-1), this protein is Ribulose bisphosphate carboxylase large chain.